The primary structure comprises 360 residues: Mediator of RNA polymerase II transcription subunit 6 (360 aa).

Disordered regions lie at residues 186–238 and 316–360; these read PAQP…NDPL and AAAA…PGAA. Composition is skewed to low complexity over residues 190-205 and 316-325; these read SAGAGAASGTTNYTAS and AAAAAANANA.

Belongs to the Mediator complex subunit 6 family. Component of the Mediator complex.

It is found in the nucleus. In terms of biological role, component of the Mediator complex, a coactivator involved in the regulated transcription of nearly all RNA polymerase II-dependent genes. Mediator functions as a bridge to convey information from gene-specific regulatory proteins to the basal RNA polymerase II transcription machinery. Mediator is recruited to promoters by direct interactions with regulatory proteins and serves as a scaffold for the assembly of a functional preinitiation complex with RNA polymerase II and the general transcription factors. The sequence is that of Mediator of RNA polymerase II transcription subunit 6 (med-6) from Neurospora crassa (strain ATCC 24698 / 74-OR23-1A / CBS 708.71 / DSM 1257 / FGSC 987).